The primary structure comprises 498 residues: MTTKKLYFLSISIIILVAISIAIHITLNSNTKTRLTNDSQQQIDTIIEHDLQKGHIPGASILIVKNGKVFLNKGYGYQDVDKKVKASPTTKYEIASNTKAFTGLAILKLAQEGRLNLNDAVSKHVPHFKMNYNGQNETITIKQLLAQTSGIPSDITSEDAVTNKNNRLNDVTRAIMGDELHHKPGEEFEYSNMNYDLLGLIIQNVTKQSYTQYITDHWLKPLQMKHTTFKQTNYKSKHDAIGYELQGSTPVVSKPEFNLWDTPSAYMMTSTEDLEHWIKFQLNPPDKYKSLVQQSHKNLSSTIGEPNANPYASGWFTNNDEHLVFHSGTLDNFSSFILLNPKQNYGIVVLANLNSEYVPKLVEHLNTQIVNHKRYSTVASILNQYKDQFNIVTVLMTTLILLAFIFSAYRAWQMRHGQILLRRSKRIAVLSWLTLCLCIAIALILYALPYLILGSNNWSFVLTWLPIEIKLALITTLIALFSTLIVILLFLHTKITKT.

4 helical membrane-spanning segments follow: residues 6–26, 389–409, 433–453, and 471–491; these read LYFLSISIIILVAISIAIHIT, FNIVTVLMTTLILLAFIFSAY, LTLCLCIAIALILYALPYLIL, and LALITTLIALFSTLIVILLFL.

The protein localises to the cell membrane. Its precise function is unknown. Has no penicillin-binding activity and is not involved in methicillin resistance. The chain is Protein flp (flp) from Staphylococcus aureus (strain MW2).